The sequence spans 343 residues: MMNAVITSATINCNSLSPSWTCGDNSPSKLLLGEISAALSRRRTVKVSCGKSSPDDYHSTLKSLNSRGRFPRKSLGQHYMLNSDINDQLASAADVKEGDFVLEIGPGTGSLTNVLINLGATVLAIEKDPHMVDLVSERFAGSDKFKVLQEDFVKCHIRSHMLSILETRRLSHPDSALAKVVSNLPFNISTDVVKLLLPMGDIFSKVVLLLQDEAALRLVEPALRTSEYRPINILINFYSEPEYNFRVPRENFFPQPKVDAAVVTFKLKHPRDYPDVSSTKNFFSLVNSAFNGKRKMLRKSLQHISSSPDIEKALGVAGLPATSRPEELTLDDFVKLHNVIARE.

Residues 1-48 (MMNAVITSATINCNSLSPSWTCGDNSPSKLLLGEISAALSRRRTVKVS) constitute a chloroplast transit peptide. Positions 78, 80, 105, 126, 151, and 183 each coordinate S-adenosyl-L-methionine.

Belongs to the class I-like SAM-binding methyltransferase superfamily. rRNA adenine N(6)-methyltransferase family.

It localises to the plastid. Its subcellular location is the chloroplast. Required for methylation of the 3' adenosines in the small subunit of plastid rRNA. Essential for chloroplast biogenesis at low temperatures. This is Ribosomal RNA small subunit methyltransferase, chloroplastic from Arabidopsis thaliana (Mouse-ear cress).